The sequence spans 499 residues: Rhamnogalacturonan I rhamnosyltransferase 1 (499 aa).

Residues 31 to 50 (WFVRVCSSILVWTCLVQLFA) form a helical; Signal-anchor for type II membrane protein membrane-spanning segment. N-linked (GlcNAc...) asparagine glycosylation is found at Asn-88, Asn-121, and Asn-207. 261–263 (HLR) lines the substrate pocket. Residues Asn-375, Asn-435, and Asn-496 are each glycosylated (N-linked (GlcNAc...) asparagine).

This sequence belongs to the glycosyltransferase GT106 family.

It localises to the golgi apparatus membrane. The catalysed reaction is alpha-D-galacturonosyl-[(1-&gt;2)-alpha-L-rhamnosyl-(1-&gt;4)-alpha-D-galacturonosyl](n) + UDP-beta-L-rhamnose = [(1-&gt;2)-alpha-L-rhamnosyl-(1-&gt;4)-alpha-D-galacturonosyl](n+1) + UDP + H(+). It functions in the pathway glycan metabolism; pectin biosynthesis. Glycosyltransferase involved in the formation of rhamnogalacturonan I (RG-I) oligosaccharides in the seed coat mucilage, which is a specialized cell wall with abundant RG-I. Transfers the rhamnose residue from UDP-beta-L-rhamnose to RG-I oligosaccharides. This is Rhamnogalacturonan I rhamnosyltransferase 1 from Arabidopsis thaliana (Mouse-ear cress).